We begin with the raw amino-acid sequence, 240 residues long: Mannose-binding protein C (240 aa).

Residues 1–18 (MSLFPSLHLLLLIVMTAS) form the signal peptide. Collagen-like domains lie at 39 to 61 (SPGI…KGEP) and 67 to 97 (GLQG…GDSG). P46 carries the post-translational modification Hydroxyproline. The tract at residues 48 to 102 (KDGLDGAKGEKGEPGQGLIGLQGLPGMVGPQGSPGIPGLPGLKGQKGDSGIDPGN) is disordered. The span at 49-60 (DGLDGAKGEKGE) shows a compositional bias: basic and acidic residues. Hydroxyproline occurs at positions 72, 81, and 87. Positions 104 to 122 (LANLRSELDNIKKWLIFAQ) form a coiled coil. In terms of domain architecture, C-type lectin spans 126–237 (VGKKLYLTNG…CSSQLSAVCE (112 aa)). Disulfide bonds link C147–C236 and C214–C228.

In terms of assembly, interacts with MASP1 and MASP2. Interacts with MEP1A and MEP1B and may inhibit their catalytic activity. Forms oligomeric complexes of 2 or 3 homotrimers. Expressed in liver. Weakly expressed in kidney and testis.

It is found in the secreted. In terms of biological role, calcium-dependent lectin involved in innate immune defense. Binds mannose, fucose and N-acetylglucosamine on different microorganisms and activates the lectin complement pathway. Binds to late apoptotic cells, as well as to apoptotic blebs and to necrotic cells, but not to early apoptotic cells, facilitating their uptake by macrophages. According to some authors, it only binds mannose. The sequence is that of Mannose-binding protein C from Sus scrofa (Pig).